We begin with the raw amino-acid sequence, 298 residues long: Protein REVEILLE 8 (298 aa).

A disordered region spans residues 1-44 (MSSSPSRNPTNAEAPPPPPTSTDAVAEGSSKKVRKPYTITKSRE). The region spanning 38–92 (TITKSRESWTEEEHDKFLEALQLFDRDWKKIEDFVGSKTVIQIRSHAQKYFLKVQ) is the HTH myb-type domain. Positions 65–88 (WKKIEDFVGSKTVIQIRSHAQKYF) form a DNA-binding region, H-T-H motif. Residues 96-123 (TLAHVPPPRPKRKAAHPYPQKASKNAQM) form a disordered region.

The protein resides in the nucleus. Transcriptional activator of evening element (EE)-containing clock-controlled genes. Forms a negative feedback loop with APRR5. Regulates the pattern of histone H3 acetylation of the TOC1 promoter. RVE4, RVE6 and RVE8 are components of the circadian system acting synergistically to regulate flowering time, redundantly to regulate leaf growth, and antagonistically to regulate hypocotyl elongation; their action seems independent of ZTL and HY5. The polypeptide is Protein REVEILLE 8 (Arabidopsis thaliana (Mouse-ear cress)).